We begin with the raw amino-acid sequence, 171 residues long: 3-hydroxydecanoyl-[acyl-carrier-protein] dehydratase (171 aa).

His-70 is an active-site residue.

The protein belongs to the thioester dehydratase family. FabA subfamily. Homodimer.

It localises to the cytoplasm. It catalyses the reaction a (3R)-hydroxyacyl-[ACP] = a (2E)-enoyl-[ACP] + H2O. It carries out the reaction (3R)-hydroxydecanoyl-[ACP] = (2E)-decenoyl-[ACP] + H2O. The enzyme catalyses (2E)-decenoyl-[ACP] = (3Z)-decenoyl-[ACP]. It functions in the pathway lipid metabolism; fatty acid biosynthesis. Functionally, necessary for the introduction of cis unsaturation into fatty acids. Catalyzes the dehydration of (3R)-3-hydroxydecanoyl-ACP to E-(2)-decenoyl-ACP and then its isomerization to Z-(3)-decenoyl-ACP. Can catalyze the dehydratase reaction for beta-hydroxyacyl-ACPs with saturated chain lengths up to 16:0, being most active on intermediate chain length. The sequence is that of 3-hydroxydecanoyl-[acyl-carrier-protein] dehydratase from Pseudomonas fluorescens (strain SBW25).